The chain runs to 298 residues: MKILWAALVLTLLAGCRADVEPEVEVRETAVWQSGQPWELALSRFWDYLRWVQTLSDQVQEELLSSQVTQELTLLMEDTMKELKAYKSELEKEVGPMAEDTKARLSKELQGAQARLAGDMEEVRNRLSQYRSEVQAMLGQSSEELRARLASHLRKLRKRLQRDAEELQKRLAVYKAGAQEGAERGVSAIRERLGSLMEQGRLQALTSHPLRERAQAWGEQVRGRLEKVGSQARDRLEEVREQMEEVRVKVEEQTEAFQARLKSWFEPMVEDLRRQWAELIEKVQVAVGASTSPPSQKS.

The first 18 residues, 1–18, serve as a signal peptide directing secretion; sequence MKILWAALVLTLLAGCRA. Repeat copies occupy residues 74 to 95, 96 to 117, 118 to 139, 140 to 161, 162 to 183, and 223 to 244. An 8 X 22 AA approximate tandem repeats region spans residues 74–244; that stretch reads LLMEDTMKEL…RLEEVREQME (171 aa). Methionine 137 carries the post-translational modification Methionine sulfoxide. At serine 141 the chain carries Phosphoserine. The tract at residues 152 to 162 is LDL and other lipoprotein receptors binding; sequence HLRKLRKRLQR. 156 to 159 lines the heparin pocket; the sequence is LRKR. Residues 204–272 form a lipid-binding and lipoprotein association region; the sequence is ALTSHPLRER…SWFEPMVEDL (69 aa). 218–225 is a binding site for heparin; the sequence is GEQVRGRL. A specificity for association with VLDL region spans residues 260–272; the sequence is RLKSWFEPMVEDL.

It belongs to the apolipoprotein A1/A4/E family. As to quaternary structure, homotetramer. May interact with ABCA1; functionally associated with ABCA1 in the biogenesis of HDLs. May interact with APP/A4 amyloid-beta peptide; the interaction is extremely stable in vitro but its physiological significance is unclear. May interact with MAPT. May interact with MAP2. In the cerebrospinal fluid, interacts with secreted SORL1. Interacts with PMEL; this allows the loading of PMEL luminal fragment on ILVs to induce fibril nucleation. In terms of processing, APOE exists as multiple glycosylated and sialylated glycoforms within cells and in plasma. The extent of glycosylation and sialylation are tissue and context specific. Glycated in plasma VLDL. Post-translationally, phosphorylated by FAM20C in the extracellular medium.

It is found in the secreted. The protein localises to the extracellular space. It localises to the extracellular matrix. Its subcellular location is the extracellular vesicle. The protein resides in the endosome. It is found in the multivesicular body. Functionally, APOE is an apolipoprotein, a protein associating with lipid particles, that mainly functions in lipoprotein-mediated lipid transport between organs via the plasma and interstitial fluids. APOE is a core component of plasma lipoproteins and is involved in their production, conversion and clearance. Apolipoproteins are amphipathic molecules that interact both with lipids of the lipoprotein particle core and the aqueous environment of the plasma. As such, APOE associates with chylomicrons, chylomicron remnants, very low density lipoproteins (VLDL) and intermediate density lipoproteins (IDL) but shows a preferential binding to high-density lipoproteins (HDL). It also binds a wide range of cellular receptors including the LDL receptor/LDLR, the LDL receptor-related proteins LRP1, LRP2 and LRP8 and the very low-density lipoprotein receptor/VLDLR that mediate the cellular uptake of the APOE-containing lipoprotein particles. Finally, APOE also has a heparin-binding activity and binds heparan-sulfate proteoglycans on the surface of cells, a property that supports the capture and the receptor-mediated uptake of APOE-containing lipoproteins by cells. A main function of APOE is to mediate lipoprotein clearance through the uptake of chylomicrons, VLDLs, and HDLs by hepatocytes. APOE is also involved in the biosynthesis by the liver of VLDLs as well as their uptake by peripheral tissues ensuring the delivery of triglycerides and energy storage in muscle, heart and adipose tissues. By participating in the lipoprotein-mediated distribution of lipids among tissues, APOE plays a critical role in plasma and tissues lipid homeostasis. APOE is also involved in two steps of reverse cholesterol transport, the HDLs-mediated transport of cholesterol from peripheral tissues to the liver, and thereby plays an important role in cholesterol homeostasis. First, it is functionally associated with ABCA1 in the biogenesis of HDLs in tissues. Second, it is enriched in circulating HDLs and mediates their uptake by hepatocytes. APOE also plays an important role in lipid transport in the central nervous system, regulating neuron survival and sprouting. This is Apolipoprotein E (APOE) from Hydrochoerus hydrochaeris (Capybara).